We begin with the raw amino-acid sequence, 150 residues long: Probable histone H2A.7 (150 aa).

Positions 1–12 are enriched in basic residues; sequence MESTGKVKKAFG. Disordered regions lie at residues 1 to 27 and 129 to 150; these read MEST…SVSK and KSAT…PKKA. Position 146 is a phosphoserine (Ser-146). The SPKK motif motif lies at 146–149; that stretch reads SPKK.

The protein belongs to the histone H2A family. In terms of assembly, the nucleosome is a histone octamer containing two molecules each of H2A, H2B, H3 and H4 assembled in one H3-H4 heterotetramer and two H2A-H2B heterodimers. The octamer wraps approximately 147 bp of DNA. Not ubiquitinated. In terms of tissue distribution, strong expression through-out the roots and leaves. Also found in meristems and dividing cells.

The protein resides in the nucleus. The protein localises to the chromosome. Core component of nucleosome. Nucleosomes wrap and compact DNA into chromatin, limiting DNA accessibility to the cellular machineries which require DNA as a template. Histones thereby play a central role in transcription regulation, DNA repair, DNA replication and chromosomal stability. DNA accessibility is regulated via a complex set of post-translational modifications of histones, also called histone code, and nucleosome remodeling. The polypeptide is Probable histone H2A.7 (Arabidopsis thaliana (Mouse-ear cress)).